We begin with the raw amino-acid sequence, 106 residues long: Iron-sulfur cluster assembly protein CyaY (106 aa).

Belongs to the frataxin family.

In terms of biological role, involved in iron-sulfur (Fe-S) cluster assembly. May act as a regulator of Fe-S biogenesis. The protein is Iron-sulfur cluster assembly protein CyaY of Escherichia coli O6:H1 (strain CFT073 / ATCC 700928 / UPEC).